A 264-amino-acid polypeptide reads, in one-letter code: Indole-3-glycerol phosphate synthase (264 aa).

It belongs to the TrpC family.

It catalyses the reaction 1-(2-carboxyphenylamino)-1-deoxy-D-ribulose 5-phosphate + H(+) = (1S,2R)-1-C-(indol-3-yl)glycerol 3-phosphate + CO2 + H2O. The protein operates within amino-acid biosynthesis; L-tryptophan biosynthesis; L-tryptophan from chorismate: step 4/5. The polypeptide is Indole-3-glycerol phosphate synthase (Xylella fastidiosa (strain M12)).